We begin with the raw amino-acid sequence, 646 residues long: Choline transporter-like protein 1 (646 aa).

At 1–27 (MGCCGCGSEEGSVRQWKPLEQRSCTDV) the chain is on the cytoplasmic side. The helical transmembrane segment at 28–48 (LWLLIFVLFCIGMAIICGFAI) threads the bilayer. The Extracellular portion of the chain corresponds to 49-207 (ASGAAQRLVF…RVITGVMTSK (159 aa)). An N-linked (GlcNAc...) asparagine glycan is attached at Asn133. Residues 208–228 (EIIVGLCLMSLVLSILLMVII) traverse the membrane as a helical segment. At 229–233 (RYISK) the chain is on the cytoplasmic side. The chain crosses the membrane as a helical span at residues 234–254 (VLVWILAILTIIGSIGGTAVL). Residues 255-281 (WWLYADHKKTLKLDPSQGDVAADNVTA) lie on the Extracellular side of the membrane. The N-linked (GlcNAc...) asparagine glycan is linked to Asn278. The chain crosses the membrane as a helical span at residues 282–302 (LLVCAIIATVITVILLLLMLI). The Cytoplasmic segment spans residues 303–308 (MRKRVA). The helical transmembrane segment at 309 to 329 (LTIALFHVAGKVFIHIPFLIF) threads the bilayer. Residues 330 to 331 (QS) lie on the Extracellular side of the membrane. Residues 332–352 (LWTFLALAFFWIYWIAVLLLL) traverse the membrane as a helical segment. Over 353–373 (ATAGYPQKKDQGYVEFKVSGP) the chain is Cytoplasmic. The chain crosses the membrane as a helical span at residues 374 to 394 (LQYTWIYHLVGLIWISEFILA). Residues 395 to 435 (CQQMTIAGAVVTYYFTRDKHNLPATPILASMCRLIKYHLGT) lie on the Extracellular side of the membrane. A helical membrane pass occupies residues 436 to 456 (VAKGSFIITLIKIPQMILVYI). Over 457 to 530 (HSQLKGKENA…RVAAINTVGD (74 aa)) the chain is Cytoplasmic. The helical transmembrane segment at 531–551 (FVLFLGKLLIVLVTGFVGIIL) threads the bilayer. Over 552–559 (LNYQRDYT) the chain is Extracellular. The helical transmembrane segment at 560 to 580 (VWVLPLIIICLFAFFVSHCFL) threads the bilayer. The Cytoplasmic segment spans residues 581–646 (SIYEMVVDVL…KSMASGSDNA (66 aa)).

It belongs to the CTL (choline transporter-like) family. As to expression, present in myelinated structures from brain and spinal cord (at protein level).

It is found in the cell membrane. The protein localises to the mitochondrion outer membrane. The enzyme catalyses choline(out) + n H(+)(in) = choline(in) + n H(+)(out). The catalysed reaction is ethanolamine(out) + n H(+)(in) = ethanolamine(in) + n H(+)(out). In terms of biological role, probable choline transporter. May be involved in membrane synthesis and myelin production. The polypeptide is Choline transporter-like protein 1 (slc44a1) (Torpedo marmorata (Marbled electric ray)).